The following is a 125-amino-acid chain: DNA-directed RNA polymerases I and III subunit RPAC2 (125 aa).

This sequence belongs to the archaeal Rpo11/eukaryotic RPB11/RPC19 RNA polymerase subunit family. Component of the RNA polymerase I (Pol I) and RNA polymerase III (Pol III) complexes consisting of 14 and 17 subunits, respectively.

It is found in the nucleus. Functionally, DNA-dependent RNA polymerase catalyzes the transcription of DNA into RNA using the four ribonucleoside triphosphates as substrates. Common core component of RNA polymerases I and III which synthesize ribosomal RNA precursors and small RNAs, such as 5S rRNA and tRNAs, respectively. The polypeptide is DNA-directed RNA polymerases I and III subunit RPAC2 (rpc19) (Schizosaccharomyces pombe (strain 972 / ATCC 24843) (Fission yeast)).